Consider the following 417-residue polypeptide: Gamma-glutamyl phosphate reductase (417 aa).

It belongs to the gamma-glutamyl phosphate reductase family.

It is found in the cytoplasm. The enzyme catalyses L-glutamate 5-semialdehyde + phosphate + NADP(+) = L-glutamyl 5-phosphate + NADPH + H(+). It participates in amino-acid biosynthesis; L-proline biosynthesis; L-glutamate 5-semialdehyde from L-glutamate: step 2/2. Catalyzes the NADPH-dependent reduction of L-glutamate 5-phosphate into L-glutamate 5-semialdehyde and phosphate. The product spontaneously undergoes cyclization to form 1-pyrroline-5-carboxylate. The sequence is that of Gamma-glutamyl phosphate reductase from Polynucleobacter asymbioticus (strain DSM 18221 / CIP 109841 / QLW-P1DMWA-1) (Polynucleobacter necessarius subsp. asymbioticus).